Consider the following 341-residue polypeptide: Methionine import ATP-binding protein MetN (341 aa).

Residues 9 to 247 enclose the ABC transporter domain; it reads ISVEQLNKEI…PQSAITEELF (239 aa). Residue 41–48 coordinates ATP; that stretch reads GHSGSGKS.

The protein belongs to the ABC transporter superfamily. Methionine importer (TC 3.A.1.24) family. As to quaternary structure, the complex is composed of two ATP-binding proteins (MetN), two transmembrane proteins (MetI) and a solute-binding protein (MetQ).

The protein localises to the cell inner membrane. The enzyme catalyses L-methionine(out) + ATP + H2O = L-methionine(in) + ADP + phosphate + H(+). It catalyses the reaction D-methionine(out) + ATP + H2O = D-methionine(in) + ADP + phosphate + H(+). In terms of biological role, part of the ABC transporter complex MetNIQ involved in methionine import. Responsible for energy coupling to the transport system. The polypeptide is Methionine import ATP-binding protein MetN (Chlamydia abortus (strain DSM 27085 / S26/3) (Chlamydophila abortus)).